The following is a 141-amino-acid chain: Hemoglobin subunit alpha-A (141 aa).

Residues 1-141 (VLSGSDKTNV…VGNVLTAKYR (141 aa)) enclose the Globin domain. His-58 contacts O2. His-87 provides a ligand contact to heme b.

The protein belongs to the globin family. In terms of assembly, heterotetramer of two alpha chains and two beta chains. Red blood cells.

Involved in oxygen transport from the lung to the various peripheral tissues. The chain is Hemoglobin subunit alpha-A (HBAA) from Chroicocephalus ridibundus (Black-headed gull).